The following is a 67-amino-acid chain: Retron Se72 cold shock-like protein (67 aa).

One can recognise a CSD domain in the interval M1–K66.

In terms of biological role, probable cold shock-like component of antiviral defense system retron Se72, composed of a non-coding RNA (ncRNA), a reverse transcriptase (RT) and this protein. Expression of retron Se72 confers protection against bacteriophage lambda. At multiplicity of infection (MOI) of 0.02 cultures slow growth when infected with lambda but do not collapse, at MOI 2 cultures enter growth stasis. The chain is Retron Se72 cold shock-like protein from Salmonella heidelberg (strain 579083-10).